The following is a 252-amino-acid chain: Triosephosphate isomerase (252 aa).

10–12 (NWK) serves as a coordination point for substrate. H96 functions as the Electrophile in the catalytic mechanism. Catalysis depends on E168, which acts as the Proton acceptor. Residues G174, S214, and 235-236 (GG) contribute to the substrate site.

The protein belongs to the triosephosphate isomerase family. As to quaternary structure, homodimer.

The protein localises to the cytoplasm. The enzyme catalyses D-glyceraldehyde 3-phosphate = dihydroxyacetone phosphate. Its pathway is carbohydrate biosynthesis; gluconeogenesis. The protein operates within carbohydrate degradation; glycolysis; D-glyceraldehyde 3-phosphate from glycerone phosphate: step 1/1. Seems to be capable of enhancing bacteriocin synthesis. Functionally, involved in the gluconeogenesis. Catalyzes stereospecifically the conversion of dihydroxyacetone phosphate (DHAP) to D-glyceraldehyde-3-phosphate (G3P). This Lactobacillus delbrueckii subsp. lactis protein is Triosephosphate isomerase.